A 388-amino-acid chain; its full sequence is Chorismate synthase (388 aa).

NADP(+)-binding residues include R39 and R45. FMN-binding positions include 130-132 (RSS), 251-252 (NA), G296, 311-315 (KPIPT), and R337.

The protein belongs to the chorismate synthase family. As to quaternary structure, homotetramer. Requires FMNH2 as cofactor.

The catalysed reaction is 5-O-(1-carboxyvinyl)-3-phosphoshikimate = chorismate + phosphate. The protein operates within metabolic intermediate biosynthesis; chorismate biosynthesis; chorismate from D-erythrose 4-phosphate and phosphoenolpyruvate: step 7/7. Functionally, catalyzes the anti-1,4-elimination of the C-3 phosphate and the C-6 proR hydrogen from 5-enolpyruvylshikimate-3-phosphate (EPSP) to yield chorismate, which is the branch point compound that serves as the starting substrate for the three terminal pathways of aromatic amino acid biosynthesis. This reaction introduces a second double bond into the aromatic ring system. The protein is Chorismate synthase of Geobacillus sp. (strain WCH70).